A 1325-amino-acid polypeptide reads, in one-letter code: Sperm-specific sodium:proton exchanger (1325 aa).

The N-terminal stretch at 1 to 29 is a signal peptide; the sequence is MKKRVVKLRELVPAVAALAVAVLIQSATG. The segment at 28–68 is disordered; it reads TGSSGGSGHTPTTQATHADDHDLTTHNGTEEHDDGHDDGHD. Residues 30 to 76 lie on the Extracellular side of the membrane; the sequence is SSGGSGHTPTTQATHADDHDLTTHNGTEEHDDGHDDGHDDLHAHAPK. A compositionally biased stretch (basic and acidic residues) spans 44-68; the sequence is HADDHDLTTHNGTEEHDDGHDDGHD. His-73 provides a ligand contact to a 1,2-diacylglycero-3-phosphate. Residues 77–96 form a helical membrane-spanning segment; the sequence is VIVFISGSCLFGAISRSLFK. The Cytoplasmic segment spans residues 97–101; sequence KLPIP. The chain crosses the membrane as a helical span at residues 102–119; it reads YTVVLLILGAILGVVASN. Topologically, residues 120-135 are extracellular; the sequence is VPLVEEHTRDVAHMDP. The chain crosses the membrane as a helical span at residues 136–152; sequence HVLLQIFLPVLIFESAF. Over 153 to 162 the chain is Cytoplasmic; sequence AMDVHTFMRS. Residues 163 to 188 form a helical membrane-spanning segment; the sequence is FSQVCILALFGLVVASVLTAVLAMNL. A transport core domain region spans residues 163–250; that stretch reads FSQVCILALF…AIVIFNVFMK (88 aa). The Extracellular portion of the chain corresponds to 189 to 194; it reads FNYNWN. Residues 195–220 form a helical membrane-spanning segment; sequence FSEAMMFGAIMSATDPVAVVALLKDL. The Cytoplasmic segment spans residues 221–223; the sequence is GAS. Residues 224-249 form a helical membrane-spanning segment; that stretch reads KQLGTIIEGESLLNDGCAIVIFNVFM. The short motif at 237–238 is the Essential for sodium:proton exchange element; it reads ND. Over 250–260 the chain is Extracellular; it reads KMVFFPQLTST. The chain crosses the membrane as a helical span at residues 261-292; sequence VGQNVLYFLQVAVAGPLWGYAVAKVTVFFLSH. Topologically, residues 293–296 are cytoplasmic; sequence IFND. A helical transmembrane segment spans residues 297 to 319; sequence ALVEITITLAATYLTYYIGDIWL. The Extracellular segment spans residues 320–322; it reads EVS. A helical membrane pass occupies residues 323–336; sequence GVLAVVVLGLIVNA. Topologically, residues 337-343 are cytoplasmic; sequence EKTSISP. Residues 344 to 377 form a helical membrane-spanning segment; that stretch reads EVEVFLHRFWEMLAYLANTLIFMMVGVVVTQKAL. The Extracellular segment spans residues 378–382; sequence VAVDK. A helical membrane pass occupies residues 383–412; the sequence is MDWFYLIILYLAITIIRGMVISLFSPILSR. A transport core domain region spans residues 383–481; it reads MDWFYLIILY…TTIQTLLRIL (99 aa). Topologically, residues 413–418 are cytoplasmic; the sequence is IGYGLT. A helical transmembrane segment spans residues 419–446; it reads WRNAVIMTWGGLRGAVGLALALVVENLA. The Extracellular segment spans residues 447-450; the sequence is GNDV. A helical transmembrane segment spans residues 451–481; that stretch reads IGSKFLFHTAGIVVLTLVINATTIQTLLRIL. Topologically, residues 482 to 677 are cytoplasmic; the sequence is GMSDISIPKR…GKLMYKICHH (196 aa). An interacts with the S4 segment of voltage sensor domain region spans residues 575-620; sequence FADMMEEARLRMLKAEKISYWKQFEHGMLAREALRLLVQHAEVAAD. Residues 605-620 are interacts with the transport core domain; can lock the transporter in the inward conformation; that stretch reads REALRLLVQHAEVAAD. The helical transmembrane segment at 678–708 threads the bilayer; it reads MAFEVTINIAIVLNIVPIIMEFVVQDKMASV. Residues 709-724 are Extracellular-facing; it reads STMAAPGSTVSSEPSS. Residues 725-752 form a helical membrane-spanning segment; that stretch reads LQKIEDALRISNYVFFVIYAIEAIVKIL. The Cytoplasmic portion of the chain corresponds to 753–760; sequence GLGRHYIV. The helical transmembrane segment at 761–784 threads the bilayer; sequence SHWNKFDAFILVVALVDIIIAETL. The Extracellular portion of the chain corresponds to 785–795; sequence LKGSITINLSS. The helical transmembrane segment at 796–822 threads the bilayer; that stretch reads IKVVKLFRLLRGLRMLRLTKALIPKLI. The tract at residues 796-857 is S4 segment of voltage sensor domain; that stretch reads IKVVKLFRLL…EEVGKIIDRM (62 aa). Over 823–1325 the chain is Cytoplasmic; sequence LVVNGKINNQ…EEGAAPRVNV (503 aa). The segment at 860-919 is interacts with the S4 segment of voltage sensor domain; that stretch reads NKKILRELKHISETGRLQVVKELGLLQREHPGIAVSVKTRQAIRTILNHSRETIHELQGA. A cNMP-binding domain region spans residues 968–1068; it reads KLIDFIKARA…CETTVQVYFI (101 aa). Residue Gly-1043 participates in 3',5'-cyclic AMP binding. 3',5'-cyclic GMP is bound by residues Gly-1043, Glu-1044, and Met-1045. 4 residues coordinate 3',5'-cyclic AMP: Met-1045, Gly-1046, Arg-1053, and Asn-1054. 2 residues coordinate 3',5'-cyclic GMP: Arg-1053 and Asn-1054. Residues 1237–1325 are disordered; sequence MLSRKSSGAA…EEGAAPRVNV (89 aa). A compositionally biased stretch (low complexity) spans 1266 to 1280; that stretch reads VSPSVPTKTTPKPKS.

Belongs to the monovalent cation:proton antiporter 1 (CPA1) transporter (TC 2.A.36) family. Homodimer; the dimerization is stabilized in the presence of phosphatidic acids.

The protein resides in the cell projection. Its subcellular location is the cilium. The protein localises to the flagellum membrane. The catalysed reaction is Na(+)(in) + H(+)(out) = Na(+)(out) + H(+)(in). Gated by voltage and stimulated by cyclic nucleotides which shift the activation voltage closer to resting membrane potential. Not inhibited by common sodium:proton exchanger inhibitors such as amiloride. Electroneutral sodium:proton antiporter that regulates intracellular pH of sperm along with capacitation and fertility. Activated in response to egg-derived chemoattractants, couples membrane voltage to sodium:proton exchange and transduces membrane hyperpolarization to cytoplasmic alkalization to cAMP signaling and ultimately to sperm motility. The protein is Sperm-specific sodium:proton exchanger of Strongylocentrotus purpuratus (Purple sea urchin).